A 697-amino-acid chain; its full sequence is Potassium-transporting ATPase ATP-binding subunit (697 aa).

A run of 4 helical transmembrane segments spans residues 55–75, 82–102, 245–265, and 271–291; these read PIMFVVEIGFIITFILSFLPS, GWFNITVSFILLFTVLFANFA, LTFIFLIVVVTLPIFTNYLGF, and VLVALLVCLIPTTIGGLLSAI. Asp324 functions as the 4-aspartylphosphate intermediate in the catalytic mechanism. ATP contacts are provided by residues Asp361, Glu365, 393–400, and Lys412; that span reads FKAETRMS. 2 residues coordinate Mg(2+): Asp535 and Asp539. 3 consecutive transmembrane segments (helical) span residues 605 to 625, 633 to 653, and 677 to 697; these read FAIIPAMFTLAIPQMEALNIM, AILSALLFNAVIIPLLIPLAM, and GGVIVPFIGIKVIDMIVGLFI.

It belongs to the cation transport ATPase (P-type) (TC 3.A.3) family. Type IA subfamily. The system is composed of three essential subunits: KdpA, KdpB and KdpC.

Its subcellular location is the cell membrane. It catalyses the reaction K(+)(out) + ATP + H2O = K(+)(in) + ADP + phosphate + H(+). Part of the high-affinity ATP-driven potassium transport (or Kdp) system, which catalyzes the hydrolysis of ATP coupled with the electrogenic transport of potassium into the cytoplasm. This subunit is responsible for energy coupling to the transport system and for the release of the potassium ions to the cytoplasm. This chain is Potassium-transporting ATPase ATP-binding subunit, found in Bacillus cereus (strain AH187).